Here is a 195-residue protein sequence, read N- to C-terminus: NADH-quinone oxidoreductase subunit B (195 aa).

Cysteine 74, cysteine 75, cysteine 139, and cysteine 169 together coordinate [4Fe-4S] cluster.

It belongs to the complex I 20 kDa subunit family. NDH-1 is composed of 14 different subunits. Subunits NuoB, C, D, E, F, and G constitute the peripheral sector of the complex. The cofactor is [4Fe-4S] cluster.

The protein resides in the cell inner membrane. It carries out the reaction a quinone + NADH + 5 H(+)(in) = a quinol + NAD(+) + 4 H(+)(out). Its function is as follows. NDH-1 shuttles electrons from NADH, via FMN and iron-sulfur (Fe-S) centers, to quinones in the respiratory chain. The immediate electron acceptor for the enzyme in this species is believed to be ubiquinone. Couples the redox reaction to proton translocation (for every two electrons transferred, four hydrogen ions are translocated across the cytoplasmic membrane), and thus conserves the redox energy in a proton gradient. This is NADH-quinone oxidoreductase subunit B from Methylorubrum populi (strain ATCC BAA-705 / NCIMB 13946 / BJ001) (Methylobacterium populi).